Reading from the N-terminus, the 260-residue chain is Proliferating cell nuclear antigen (260 aa).

Residues 61 to 80 (RCDRNISMGMNLGSMSKILI) mediate DNA binding.

This sequence belongs to the PCNA family. Homotrimer. Forms a complex with activator 1 heteropentamer in the presence of ATP.

It is found in the nucleus. Its function is as follows. This protein is an auxiliary protein of DNA polymerase delta and is involved in the control of eukaryotic DNA replication by increasing the polymerase's processibility during elongation of the leading strand. In Bombyx mori (Silk moth), this protein is Proliferating cell nuclear antigen (PCNA).